Consider the following 90-residue polypeptide: Antitoxin epsilon 2 (90 aa).

It belongs to the epsilon antitoxin family. In the presence of the zeta toxin, forms an inactive PezA(2)PezT(2) heterotetramer.

Antitoxin component of a type II toxin-antitoxin (TA) system. Neutralizes the toxic effect of zeta toxin. Part of a postsegregational killing (PSK) system involved in the killing of plasmid-free cells. Continuous synthesis of the epsilon antitoxin is required to counteract the zeta toxin. This chain is Antitoxin epsilon 2, found in Enterococcus faecalis (Streptococcus faecalis).